We begin with the raw amino-acid sequence, 347 residues long: Histidinol-phosphate aminotransferase (347 aa).

Lysine 209 bears the N6-(pyridoxal phosphate)lysine mark.

Belongs to the class-II pyridoxal-phosphate-dependent aminotransferase family. Histidinol-phosphate aminotransferase subfamily. Homodimer. Pyridoxal 5'-phosphate serves as cofactor.

The enzyme catalyses L-histidinol phosphate + 2-oxoglutarate = 3-(imidazol-4-yl)-2-oxopropyl phosphate + L-glutamate. Its pathway is amino-acid biosynthesis; L-histidine biosynthesis; L-histidine from 5-phospho-alpha-D-ribose 1-diphosphate: step 7/9. This chain is Histidinol-phosphate aminotransferase, found in Syntrophotalea carbinolica (strain DSM 2380 / NBRC 103641 / GraBd1) (Pelobacter carbinolicus).